Consider the following 62-residue polypeptide: UPF0434 protein ABO_2103 (62 aa).

It belongs to the UPF0434 family.

In Alcanivorax borkumensis (strain ATCC 700651 / DSM 11573 / NCIMB 13689 / SK2), this protein is UPF0434 protein ABO_2103.